Reading from the N-terminus, the 202-residue chain is Matrix protein (202 aa).

Residues 35-38 (PPES) carry the PPXY motif motif. The interval 115 to 151 (KIRRTLVFQWAESRGPLDGEELEYSQEITWDDDSEFI) is essential for glycoprotein binding.

The protein belongs to the lyssavirus matrix protein family. Homomultimer. Interacts with nucleoprotein and with the cytoplasmic domain of glycoprotein.

The protein resides in the virion membrane. Its subcellular location is the host endomembrane system. Plays a major role in assembly and budding of virion. Completely covers the ribonucleoprotein coil and keep it in condensed bullet-shaped form. Inhibits viral transcription and stimulates replication. Plays a major role in early induction of TRAIL-mediated apoptosis in infected neurons. This is Matrix protein (M) from Myotis mystacinus (Whiskered bat).